A 432-amino-acid polypeptide reads, in one-letter code: Adenylosuccinate synthetase (432 aa).

GTP is bound by residues 13–19 (GDEGKGK) and 41–43 (GHT). Asp-14 (proton acceptor) is an active-site residue. 2 residues coordinate Mg(2+): Asp-14 and Gly-41. Residues 14 to 17 (DEGK), 39 to 42 (NAGH), Thr-130, Arg-144, Gln-225, Thr-240, and Arg-304 each bind IMP. The Proton donor role is filled by His-42. 300–306 (ATTGRRR) is a substrate binding site. GTP-binding positions include Arg-306, 332–334 (KLD), and 415–417 (STG).

Belongs to the adenylosuccinate synthetase family. In terms of assembly, homodimer. The cofactor is Mg(2+).

It is found in the cytoplasm. It catalyses the reaction IMP + L-aspartate + GTP = N(6)-(1,2-dicarboxyethyl)-AMP + GDP + phosphate + 2 H(+). It functions in the pathway purine metabolism; AMP biosynthesis via de novo pathway; AMP from IMP: step 1/2. Its function is as follows. Plays an important role in the de novo pathway of purine nucleotide biosynthesis. Catalyzes the first committed step in the biosynthesis of AMP from IMP. The polypeptide is Adenylosuccinate synthetase (Erwinia tasmaniensis (strain DSM 17950 / CFBP 7177 / CIP 109463 / NCPPB 4357 / Et1/99)).